We begin with the raw amino-acid sequence, 571 residues long: Quinone-dependent D-lactate dehydrogenase (571 aa).

The region spanning 42 to 213 is the FAD-binding PCMH-type domain; it reads GQGDALAVVF…SKLDDDRIKD (172 aa). FAD-binding positions include 76–80, 84–85, Gly143, Ser150, Gly160, and Val262; these read AANTG and GS. Residues 546 to 571 form a disordered region; sequence RENDPTNSMNPGIGKTSKRKNWQEVE.

It belongs to the quinone-dependent D-lactate dehydrogenase family. Requires FAD as cofactor.

It localises to the cell inner membrane. It catalyses the reaction (R)-lactate + a quinone = a quinol + pyruvate. Inhibited by 2-hydroxy-3-butynoic acid, but not by p-chloromercuribenzoate, n-ethylmaleimide, or 5,5'-dithiobis(2-nitrobenzoic acid). Catalyzes the oxidation of D-lactate to pyruvate. Electrons derived from D-lactate oxidation are transferred to the ubiquinone/cytochrome electron transfer chain, where they may be used to provide energy for the active transport of a variety of amino acids and sugars across the membrane. The sequence is that of Quinone-dependent D-lactate dehydrogenase from Escherichia coli (strain K12).